The chain runs to 380 residues: tRNA-specific 2-thiouridylase MnmA (380 aa).

Residues 26–33 (AMSGGVDS) and leucine 52 each bind ATP. Cysteine 120 functions as the Nucleophile in the catalytic mechanism. An intrachain disulfide couples cysteine 120 to cysteine 217. Residue glycine 144 participates in ATP binding. An interaction with tRNA region spans residues 166 to 168 (RDQ). The Cysteine persulfide intermediate role is filled by cysteine 217.

It belongs to the MnmA/TRMU family.

The protein localises to the cytoplasm. The catalysed reaction is S-sulfanyl-L-cysteinyl-[protein] + uridine(34) in tRNA + AH2 + ATP = 2-thiouridine(34) in tRNA + L-cysteinyl-[protein] + A + AMP + diphosphate + H(+). Its function is as follows. Catalyzes the 2-thiolation of uridine at the wobble position (U34) of tRNA, leading to the formation of s(2)U34. In Roseobacter denitrificans (strain ATCC 33942 / OCh 114) (Erythrobacter sp. (strain OCh 114)), this protein is tRNA-specific 2-thiouridylase MnmA.